The sequence spans 466 residues: Gastric inhibitory polypeptide receptor (466 aa).

Residues 1–21 (MTTSPILQLLLRLSLCGLLLQ) form the signal peptide. Topologically, residues 22–138 (RAETGSKGQT…DQRLILERLQ (117 aa)) are extracellular. 3 disulfides stabilise this stretch: Cys-46–Cys-70, Cys-61–Cys-103, and Cys-84–Cys-118. Asn-62 and Asn-77 each carry an N-linked (GlcNAc...) asparagine glycan. Residues 139–161 (VMYTVGYSLSLATLLLALLILSL) traverse the membrane as a helical segment. Over 162–169 (FRRLHCTR) the chain is Cytoplasmic. Residues 170-189 (NYIHINLFTSFMLRAAAILS) form a helical membrane-spanning segment. Residues 190 to 217 (RDRLLPRPGPYLGDQALALWNQALAACR) lie on the Extracellular side of the membrane. The helical transmembrane segment at 218-242 (TAQIVTQYCVGANYTWLLVEGVYLH) threads the bilayer. At 243–254 (SLLVLVGGSEEG) the chain is on the cytoplasmic side. Residues 255–278 (HFRYYLLLGWGAPALFVIPWVIVR) form a helical membrane-spanning segment. At 279 to 293 (YLYENTQCWERNEVK) the chain is on the extracellular side. A helical transmembrane segment spans residues 294–319 (AIWWIIRTPILMTILINFLIFIRILG). Residues 320–341 (ILLSKLRTRQMRCRDYRLRLAR) are Cytoplasmic-facing. Residues 342–362 (STLTLVPLLGVHEVVFAPVTE) traverse the membrane as a helical segment. At 363–377 (EQARGALRFAKLGFE) the chain is on the extracellular side. Residues 378–398 (IFLSSFQGFLVSVLYCFINKE) traverse the membrane as a helical segment. At 399 to 466 (VQSEIRRGWH…EASRELESYC (68 aa)) the chain is on the cytoplasmic side. Positions 427-466 (AFRALPSGSGPGEVPTSRGLSSGTLPGPGNEASRELESYC) are disordered.

This sequence belongs to the G-protein coupled receptor 2 family. In terms of assembly, may form homodimers and heterodimers with GLP1R. N-glycosylation is required for cell surface expression and lengthens receptor half-life by preventing degradation in the ER.

It is found in the cell membrane. This is a receptor for GIP. The activity of this receptor is mediated by G proteins which activate adenylyl cyclase. This is Gastric inhibitory polypeptide receptor (GIPR) from Homo sapiens (Human).